Consider the following 1234-residue polypeptide: ATP-dependent helicase/nuclease subunit A (1234 aa).

One can recognise a UvrD-like helicase ATP-binding domain in the interval 9-482 (STWTDDQWEA…IDLNKNFRSR (474 aa)). 30–37 (AAAGSGKT) is an ATP binding site. A UvrD-like helicase C-terminal domain is found at 509–800 (QAELKLGASY…RMMTIHSSKG (292 aa)).

The protein belongs to the helicase family. AddA subfamily. In terms of assembly, heterodimer of AddA and AddB/RexB. Mg(2+) is required as a cofactor.

It carries out the reaction Couples ATP hydrolysis with the unwinding of duplex DNA by translocating in the 3'-5' direction.. The catalysed reaction is ATP + H2O = ADP + phosphate + H(+). The heterodimer acts as both an ATP-dependent DNA helicase and an ATP-dependent, dual-direction single-stranded exonuclease. Recognizes the chi site generating a DNA molecule suitable for the initiation of homologous recombination. The AddA nuclease domain is required for chi fragment generation; this subunit has the helicase and 3' -&gt; 5' nuclease activities. The protein is ATP-dependent helicase/nuclease subunit A of Bacillus pumilus (strain SAFR-032).